Here is a 360-residue protein sequence, read N- to C-terminus: Geranylgeranyl pyrophosphate synthase 3, chloroplastic (360 aa).

The transit peptide at 1–39 (MATTVHLSSFSLFIQSRGRRDNSISSVKSLKKRTGLSPS) directs the protein to the chloroplast. The tract at residues 24–54 (ISSVKSLKKRTGLSPSSALTSQGGRDMIPPE) is disordered. Residues 36 to 46 (LSPSSALTSQG) show a composition bias toward polar residues. Isopentenyl diphosphate contacts are provided by Lys106, Arg109, and His138. 2 residues coordinate Mg(2+): Asp145 and Asp151. Dimethylallyl diphosphate is bound at residue Arg156. An isopentenyl diphosphate-binding site is contributed by Arg157. Lys245, Thr246, Gln283, Lys300, and Lys310 together coordinate dimethylallyl diphosphate.

This sequence belongs to the FPP/GGPP synthase family. As to quaternary structure, monomer. Mg(2+) serves as cofactor. In terms of tissue distribution, mainly expressed in roots.

The protein resides in the plastid. It is found in the chloroplast. The enzyme catalyses isopentenyl diphosphate + dimethylallyl diphosphate = (2E)-geranyl diphosphate + diphosphate. It catalyses the reaction isopentenyl diphosphate + (2E)-geranyl diphosphate = (2E,6E)-farnesyl diphosphate + diphosphate. The catalysed reaction is isopentenyl diphosphate + (2E,6E)-farnesyl diphosphate = (2E,6E,10E)-geranylgeranyl diphosphate + diphosphate. It participates in isoprenoid biosynthesis; farnesyl diphosphate biosynthesis; farnesyl diphosphate from geranyl diphosphate and isopentenyl diphosphate: step 1/1. Its pathway is isoprenoid biosynthesis; geranyl diphosphate biosynthesis; geranyl diphosphate from dimethylallyl diphosphate and isopentenyl diphosphate: step 1/1. It functions in the pathway isoprenoid biosynthesis; geranylgeranyl diphosphate biosynthesis; geranylgeranyl diphosphate from farnesyl diphosphate and isopentenyl diphosphate: step 1/1. In terms of biological role, catalyzes the trans-addition of the three molecules of IPP onto DMAPP to form geranylgeranyl pyrophosphate. This is Geranylgeranyl pyrophosphate synthase 3, chloroplastic (GGPP3) from Arabidopsis thaliana (Mouse-ear cress).